The chain runs to 364 residues: Chorismate synthase (364 aa).

Position 47 (R47) interacts with NADP(+). Residues 125–127 (RAS), G288, 303–307 (KPTAT), and R329 contribute to the FMN site.

This sequence belongs to the chorismate synthase family. Homotetramer. The cofactor is FMNH2.

The catalysed reaction is 5-O-(1-carboxyvinyl)-3-phosphoshikimate = chorismate + phosphate. It functions in the pathway metabolic intermediate biosynthesis; chorismate biosynthesis; chorismate from D-erythrose 4-phosphate and phosphoenolpyruvate: step 7/7. Catalyzes the anti-1,4-elimination of the C-3 phosphate and the C-6 proR hydrogen from 5-enolpyruvylshikimate-3-phosphate (EPSP) to yield chorismate, which is the branch point compound that serves as the starting substrate for the three terminal pathways of aromatic amino acid biosynthesis. This reaction introduces a second double bond into the aromatic ring system. The protein is Chorismate synthase of Synechococcus sp. (strain CC9605).